The primary structure comprises 382 residues: Galactokinase (382 aa).

Residue 34–37 (EHTD) participates in substrate binding. Position 124–130 (124–130 (GAGLSSS)) interacts with ATP. Mg(2+) is bound by residues Ser-130 and Glu-162. Asp-174 (proton acceptor) is an active-site residue. Tyr-223 lines the substrate pocket.

It belongs to the GHMP kinase family. GalK subfamily.

The protein localises to the cytoplasm. It carries out the reaction alpha-D-galactose + ATP = alpha-D-galactose 1-phosphate + ADP + H(+). It participates in carbohydrate metabolism; galactose metabolism. Catalyzes the transfer of the gamma-phosphate of ATP to D-galactose to form alpha-D-galactose-1-phosphate (Gal-1-P). The protein is Galactokinase of Salmonella schwarzengrund (strain CVM19633).